Here is a 912-residue protein sequence, read N- to C-terminus: Type II beta methyltransferase M.BslI (912 aa).

It belongs to the N(4)/N(6)-methyltransferase family. N(4) subfamily.

The enzyme catalyses a 2'-deoxycytidine in DNA + S-adenosyl-L-methionine = an N(4)-methyl-2'-deoxycytidine in DNA + S-adenosyl-L-homocysteine + H(+). A beta subtype methylase. Recognizes the double-stranded sequence 5'-CCN(7)GG-3', methylates C-2 on both strands, and protects the DNA from cleavage by the BslI endonuclease. This chain is Type II beta methyltransferase M.BslI (bslIM), found in Bacillus sp. (strain NEB-606).